The primary structure comprises 306 residues: MPYDTMQQVIGLAPKKRGTLIQKGINFSYVPLNEEGGVDYEEAEKVLKRDQPHIVVIQRSRGYDTRQSYTVDQIKKMTAFVKKVSPESLVFVDNCYGEFSEKHEPTEYGVDFTAGSLIKNAGGGIAQTGGYIVGKEELVENAAIRLTAPGIGKEEGATLTNMHEFYEGFFLAPHTTGEAIKGMIFSAALLEKMGCEVTPKWHEPRTDLIQTIIFNVPEKMINFTKEVQKNSPIDSFVEPIPSDMPGYEDKVIMAAGNFVSGSTMEFSADGPIRPPYALYMQCGLTYAHDRIAVTNAVNHLFFKENG.

To L.delbrueckii similar ORF in glnA 5'region.

This is an uncharacterized protein from Lactobacillus delbrueckii subsp. bulgaricus.